Reading from the N-terminus, the 563-residue chain is NAD-dependent malic enzyme (563 aa).

Catalysis depends on Tyr-101, which acts as the Proton donor. Residue Arg-154 participates in NAD(+) binding. Residue Lys-172 is the Proton acceptor of the active site. Residues Glu-243, Asp-244, and Asp-267 each contribute to the a divalent metal cation site. NAD(+)-binding residues include Asp-267 and Asn-416.

The protein belongs to the malic enzymes family. In terms of assembly, homotetramer. Requires Mg(2+) as cofactor. The cofactor is Mn(2+).

It carries out the reaction (S)-malate + NAD(+) = pyruvate + CO2 + NADH. The catalysed reaction is oxaloacetate + H(+) = pyruvate + CO2. This is NAD-dependent malic enzyme from Pseudomonas syringae pv. syringae (strain B728a).